The primary structure comprises 1226 residues: DNA-directed RNA polymerase subunit beta (1226 aa).

This sequence belongs to the RNA polymerase beta chain family. In terms of assembly, the RNAP catalytic core consists of 2 alpha, 1 beta, 1 beta' and 1 omega subunit. When a sigma factor is associated with the core the holoenzyme is formed, which can initiate transcription.

It carries out the reaction RNA(n) + a ribonucleoside 5'-triphosphate = RNA(n+1) + diphosphate. DNA-dependent RNA polymerase catalyzes the transcription of DNA into RNA using the four ribonucleoside triphosphates as substrates. This Leptospira interrogans serogroup Icterohaemorrhagiae serovar copenhageni (strain Fiocruz L1-130) protein is DNA-directed RNA polymerase subunit beta.